The primary structure comprises 467 residues: Mothers against decapentaplegic homolog 2 (467 aa).

Ser-2 carries the N-acetylserine modification. Thr-8 is modified (phosphothreonine; by MAPK3). The 167-residue stretch at 10 to 176 (PVVKRLLGWK…YQRVETPVLP (167 aa)) folds into the MH1 domain. The residue at position 19 (Lys-19) is an N6-acetyllysine. Zn(2+)-binding residues include Cys-74, Cys-149, Cys-161, and His-166. Residues 207-217 (PAGIEPQSNYI) are compositionally biased toward polar residues. The segment at 207–251 (PAGIEPQSNYIPETPPPGYISEDGETSDQQLNQSMDTGSPAELSP) is disordered. A Phosphothreonine modification is found at Thr-220. Positions 221–225 (PPPGY) match the PY-motif motif. Residues 233–243 (SDQQLNQSMDT) show a composition bias toward polar residues. Residue Ser-240 is modified to Phosphoserine; by CAMK2. Residues Ser-245, Ser-250, Ser-255, Ser-458, Ser-460, and Ser-464 each carry the phosphoserine modification. Residues 274–467 (WCSIAYYELN…SPSVRCSSMS (194 aa)) form the MH2 domain. Residues Ser-465 and Ser-467 each carry the phosphoserine; by TGFBR1 modification.

It belongs to the dwarfin/SMAD family. In terms of assembly, monomer; in the absence of TGF-beta. Heterodimer; in the presence of TGF-beta. Forms a heterodimer with co-SMAD, SMAD4, in the nucleus to form the transactivation complex SMAD2/SMAD4. Found in a complex with SMAD3 and TRIM33 upon addition of TGF-beta. Identified in a complex that contains at least ZNF451, SMAD2, SMAD3 and SMAD4. Interacts (via the MH2 domain) with ZFYVE9; may form trimers with the SMAD4 co-SMAD. Interacts with TAZ/WWRT1. Interacts with FOXH1. Interacts with SNW1. Interacts with CREB-binding protein (CBP) and EP300. Interacts with SNON. Interacts with ALK4/ACVR1B. Interacts with SKOR1. Interacts with SKOR2. Interacts with PRDM16. Interacts (via MH2 domain) with LEMD3. Interacts with RBPMS. Interacts with WWP1. Interacts (dephosphorylated form, via the MH1 and MH2 domains) with RANBP3 (via its C-terminal R domain); the interaction results in the export of dephosphorylated SMAD3 out of the nucleus and termination of the TGF-beta signaling. Interacts with PDPK1 (via PH domain). Interacts with DAB2; the interactions are enhanced upon TGF-beta stimulation. Interacts with USP15. Interacts with PPP5C. Interacts with LDLRAD4 (via the SMAD interaction motif). Interacts (via MH2 domain) with PMEPA1 (via the SMAD interaction motif). Interacts with ZFHX3. Interacts with ZNF451. Interacts with SMURF2 when phosphorylated on Ser-465/467. Interacts with PPM1A. Interacts with TGF-beta. Interacts with TGFBR1. Interacts with TGIF. Interacts with SMAD3 and TRIM33. Interacts with ZNF580. Interacts with NEDD4L in response to TGF-beta. Interacts with HGS. Interacts with AIP1. Interacts with WWP1. Interacts with PML. Interacts weakly with ZNF8. Interacts (when phosphorylated) with RNF111; RNF111 acts as an enhancer of the transcriptional responses by mediating ubiquitination and degradation of SMAD2 inhibitors. Interacts with YAP1 (when phosphorylated at 'Ser-127'). Interacts when phosphorylated with IPO7; the interaction facilitates translocation of SMAD2 to the nucleus. Interacts with MTMR4; negatively regulates TGF-beta signaling through SMAD2 dephosphorylation and retention in endosomes. In terms of processing, phosphorylated on one or several of Thr-220, Ser-245, Ser-250, and Ser-255. In response to TGF-beta, phosphorylated on Ser-465/467 by TGF-beta and activin type 1 receptor kinases. TGF-beta-induced Ser-465/467 phosphorylation declines progressively in a KMT5A-dependent manner. Able to interact with SMURF2 when phosphorylated on Ser-465/467, recruiting other proteins, such as SNON, for degradation. In response to decorin, the naturally occurring inhibitor of TGF-beta signaling, phosphorylated on Ser-240 by CaMK2. Phosphorylated by MAPK3 upon EGF stimulation; which increases transcriptional activity and stability, and is blocked by calmodulin. Phosphorylated by PDPK1. Post-translationally, in response to TGF-beta, ubiquitinated by NEDD4L; which promotes its degradation. Monoubiquitinated, leading to prevent DNA-binding. Deubiquitination by USP15 alleviates inhibition and promotes activation of TGF-beta target genes. Ubiquitinated by RNF111, leading to its degradation: only SMAD2 proteins that are 'in use' are targeted by RNF111, RNF111 playing a key role in activating SMAD2 and regulating its turnover. Acetylated on Lys-19 by coactivators in response to TGF-beta signaling, which increases transcriptional activity. Isoform short: Acetylation increases DNA binding activity in vitro and enhances its association with target promoters in vivo. Acetylation in the nucleus by EP300 is enhanced by TGF-beta. Expressed at high levels in skeletal muscle, endothelial cells, heart and placenta.

The protein resides in the cytoplasm. It is found in the nucleus. Functionally, receptor-regulated SMAD (R-SMAD) that is an intracellular signal transducer and transcriptional modulator activated by TGF-beta (transforming growth factor) and activin type 1 receptor kinases. Binds the TRE element in the promoter region of many genes that are regulated by TGF-beta and, on formation of the SMAD2/SMAD4 complex, activates transcription. Promotes TGFB1-mediated transcription of odontoblastic differentiation genes in dental papilla cells. Positively regulates PDPK1 kinase activity by stimulating its dissociation from the 14-3-3 protein YWHAQ which acts as a negative regulator. May act as a tumor suppressor in colorectal carcinoma. The sequence is that of Mothers against decapentaplegic homolog 2 (SMAD2) from Homo sapiens (Human).